The following is a 207-amino-acid chain: MSPDQLVVEFDRALRTILAPARSMRPLPGAALPDAELPAAQRSHVAGLMRVNHCGEICAQALYQGQALTSRDPTIRDALRSAADEETEHLAWTERRISELGGRKSFLNPLWYLGSLSLGLVAGALGDKWSLGFLAETERQVEAHLNGHLRSLPEDDSRSRAIVDQMRLDEIQHAETAVRYGAAELPSPAKVAMKVMAKVMTGVAYRF.

Positions 56, 86, 89, 138, 170, and 173 each coordinate Fe cation.

This sequence belongs to the COQ7 family. Requires Fe cation as cofactor.

Its subcellular location is the cell membrane. It catalyses the reaction a 5-methoxy-2-methyl-3-(all-trans-polyprenyl)benzene-1,4-diol + AH2 + O2 = a 3-demethylubiquinol + A + H2O. It functions in the pathway cofactor biosynthesis; ubiquinone biosynthesis. Catalyzes the hydroxylation of 2-nonaprenyl-3-methyl-6-methoxy-1,4-benzoquinol during ubiquinone biosynthesis. This is 3-demethoxyubiquinol 3-hydroxylase from Dechloromonas aromatica (strain RCB).